The chain runs to 369 residues: Transcription factor GTE6 (369 aa).

A Bromo domain is found at 89–198 (KRMQDLMRQF…EKFEEKWAHF (110 aa)). Residues 201–263 (KVQEEEKIRE…VERCRKITIE (63 aa)) adopt a coiled-coil conformation. The NET domain maps to 250–331 (MRKVVERCRK…DALDNAMKKK (82 aa)). Over residues 329–348 (KKKKEEETKTRELSGAQKKE) the composition is skewed to basic and acidic residues. A disordered region spans residues 329 to 369 (KKKKEEETKTRELSGAQKKEVSKKRNATTKLAERKTKRSRI). Positions 351–368 (KKRNATTKLAERKTKRSR) match the Bipartite nuclear localization signal motif.

In terms of tissue distribution, abundantly expressed in flowers. Weakly expressed in roots, leaves and siliques; and undetectable in 5-day-old seedlings. In the basal rosette leaves of 21-day-old plants, it is more abundant in leaves 6 and 7, which possess narrow elliptical laminae, than in leaves 1-4, which have round laminae, suggesting a possible correlation between its expression and the formation of elliptical leaf laminae in mature leaves.

It localises to the nucleus. Its function is as follows. Regulates differences in leaf patterning between juvenile and mature leaves by controlling differences in the development of primordia produced during juvenile and mature phases. Acts by activating transcription of the myb-domain protein AS1, a gene involved in leaf-axis specification. Associates with the promoter and the start of the transcribed region of AS1 and up-regulates expression of AS1 through acetylation of histones H3 and H4. The sequence is that of Transcription factor GTE6 (GTE6) from Arabidopsis thaliana (Mouse-ear cress).